A 456-amino-acid polypeptide reads, in one-letter code: NADPH-ferredoxin reductase FprA (456 aa).

Residues S14, E40, L48, and V84 each contribute to the FAD site. NADP(+)-binding positions include R110, 155 to 158 (NGNV), 199 to 200 (RR), and E211. Residues W359 and 366–368 (GVI) contribute to the FAD site. NADP(+) is bound at residue G366.

It belongs to the ferredoxin--NADP reductase type 1 family. As to quaternary structure, monomer. FAD is required as a cofactor.

It carries out the reaction 2 reduced [2Fe-2S]-[ferredoxin] + NADP(+) + H(+) = 2 oxidized [2Fe-2S]-[ferredoxin] + NADPH. Its function is as follows. May serve as electron transfer protein and supply electrons to P450 systems. The chain is NADPH-ferredoxin reductase FprA (fprA) from Mycobacterium tuberculosis (strain CDC 1551 / Oshkosh).